Consider the following 20-residue polypeptide: MKCNKMNRVQLKEGSVSMTL.

The tract at residues 1–20 is disordered; sequence MKCNKMNRVQLKEGSVSMTL.

The polypeptide is Tetracycline resistance leader peptide (tetL) (Bacillus subtilis (strain 168)).